The following is a 332-amino-acid chain: Fructose-1,6-bisphosphatase class 1 (332 aa).

4 residues coordinate Mg(2+): Glu89, Asp110, Leu112, and Asp113. Substrate-binding positions include 113-116 (DGSS), Asn206, Tyr239, 257-259 (YLY), and Lys269. Residue Glu275 coordinates Mg(2+).

This sequence belongs to the FBPase class 1 family. In terms of assembly, homotetramer. Mg(2+) serves as cofactor.

It localises to the cytoplasm. It carries out the reaction beta-D-fructose 1,6-bisphosphate + H2O = beta-D-fructose 6-phosphate + phosphate. It participates in carbohydrate biosynthesis; gluconeogenesis. This Klebsiella pneumoniae subsp. pneumoniae (strain ATCC 700721 / MGH 78578) protein is Fructose-1,6-bisphosphatase class 1.